A 373-amino-acid polypeptide reads, in one-letter code: Inhibitor of nuclear factor kappa-B kinase-interacting protein (373 aa).

Basic residues predominate over residues 1 to 11 (MSEVKSRKKPG). Residues 1–38 (MSEVKSRKKPGPKVAAPEPEKRSDGRKNPEARGGAGWA) form a disordered region. The span at 18-30 (EPEKRSDGRKNPE) shows a compositional bias: basic and acidic residues. A helical transmembrane segment spans residues 43–59 (GLSLLSLATSLGLAWLV). Coiled-coil stretches lie at residues 64–257 (EKFA…DKLS) and 290–325 (TERKMEELTVQMFNMEDDMLKAVSEIMEMQNTLEGI). A glycan (N-linked (GlcNAc...) asparagine) is linked at Asn-151.

N-glycosylated at Asn-151.

It localises to the endoplasmic reticulum membrane. Its function is as follows. Target of p53/TP53 with pro-apoptotic function. The polypeptide is Inhibitor of nuclear factor kappa-B kinase-interacting protein (Ikbip) (Rattus norvegicus (Rat)).